We begin with the raw amino-acid sequence, 1097 residues long: Error-prone DNA polymerase (1097 aa).

Residues 1039 to 1097 (PTGRGDEFAHGSPGGGDSRDRSPPKPRDIVVPLCRARHKGIDPEPETMPSAFPKPRDFR) form a disordered region. Over residues 1055 to 1066 (DSRDRSPPKPRD) the composition is skewed to basic and acidic residues.

Belongs to the DNA polymerase type-C family. DnaE2 subfamily.

It localises to the cytoplasm. The enzyme catalyses DNA(n) + a 2'-deoxyribonucleoside 5'-triphosphate = DNA(n+1) + diphosphate. Functionally, DNA polymerase involved in damage-induced mutagenesis and translesion synthesis (TLS). It is not the major replicative DNA polymerase. The protein is Error-prone DNA polymerase of Allorhizobium ampelinum (strain ATCC BAA-846 / DSM 112012 / S4) (Agrobacterium vitis (strain S4)).